The chain runs to 656 residues: DNA ligase (656 aa).

NAD(+)-binding positions include aspartate 32 to aspartate 36, serine 81 to methionine 82, and glutamate 112. The active-site N6-AMP-lysine intermediate is lysine 114. Positions 135, 169, 284, and 308 each coordinate NAD(+). 4 residues coordinate Zn(2+): cysteine 402, cysteine 405, cysteine 418, and cysteine 423. The BRCT domain maps to valine 577–lysine 656.

The protein belongs to the NAD-dependent DNA ligase family. LigA subfamily. Mg(2+) is required as a cofactor. Mn(2+) serves as cofactor.

It catalyses the reaction NAD(+) + (deoxyribonucleotide)n-3'-hydroxyl + 5'-phospho-(deoxyribonucleotide)m = (deoxyribonucleotide)n+m + AMP + beta-nicotinamide D-nucleotide.. Functionally, DNA ligase that catalyzes the formation of phosphodiester linkages between 5'-phosphoryl and 3'-hydroxyl groups in double-stranded DNA using NAD as a coenzyme and as the energy source for the reaction. It is essential for DNA replication and repair of damaged DNA. This is DNA ligase from Nautilia profundicola (strain ATCC BAA-1463 / DSM 18972 / AmH).